A 197-amino-acid polypeptide reads, in one-letter code: Small ribosomal subunit protein uS4 (197 aa).

The S4 RNA-binding domain occupies 94–158 (RRLDNVIYRF…LKKYLYDYKN (65 aa)).

It belongs to the universal ribosomal protein uS4 family. In terms of assembly, part of the 30S ribosomal subunit. Contacts protein S5. The interaction surface between S4 and S5 is involved in control of translational fidelity.

Functionally, one of the primary rRNA binding proteins, it binds directly to 16S rRNA where it nucleates assembly of the body of the 30S subunit. In terms of biological role, with S5 and S12 plays an important role in translational accuracy. This chain is Small ribosomal subunit protein uS4 (rpsD), found in Carsonella ruddii (strain PV).